Here is a 345-residue protein sequence, read N- to C-terminus: MSSIRVGIVGASGYSGEELIRLLVRHPGVDLRWITSRQYKDRTLQSVYPGIGRFGELEFDDLESLEKKENQLELVFLALPHGAGMDYAHFFYNRGKVVIDLSADFRLENPLDYELYYKLSHPHADLLKKAVYALPEIYPDQIAHSNLLAMPGCYPTAVLLSLAPFLKKGWIDPHSIEIVALSGSTGAGKTLDTKLLFSELADNLRPYSFPSHRHIPEMEQQIAKLVKTDSVKVIFLPILAPLRRGILLTVIGSLSQPISQAEAEEQAQEFYKEAPFVKILPGGIMPELRYVLYSNNLYFSIHVLEEKKKLLILAAIDNLGKGAAGQAIQVMNIRLGWAQTLGLIP.

Cys-153 is a catalytic residue.

The protein belongs to the NAGSA dehydrogenase family. Type 1 subfamily.

The protein localises to the cytoplasm. It carries out the reaction N-acetyl-L-glutamate 5-semialdehyde + phosphate + NADP(+) = N-acetyl-L-glutamyl 5-phosphate + NADPH + H(+). Its pathway is amino-acid biosynthesis; L-arginine biosynthesis; N(2)-acetyl-L-ornithine from L-glutamate: step 3/4. In terms of biological role, catalyzes the NADPH-dependent reduction of N-acetyl-5-glutamyl phosphate to yield N-acetyl-L-glutamate 5-semialdehyde. This chain is N-acetyl-gamma-glutamyl-phosphate reductase, found in Methylacidiphilum infernorum (isolate V4) (Methylokorus infernorum (strain V4)).